We begin with the raw amino-acid sequence, 350 residues long: Nicotinate-nucleotide--dimethylbenzimidazole phosphoribosyltransferase (350 aa).

Residue glutamate 317 is the Proton acceptor of the active site.

The protein belongs to the CobT family.

It carries out the reaction 5,6-dimethylbenzimidazole + nicotinate beta-D-ribonucleotide = alpha-ribazole 5'-phosphate + nicotinate + H(+). The protein operates within nucleoside biosynthesis; alpha-ribazole biosynthesis; alpha-ribazole from 5,6-dimethylbenzimidazole: step 1/2. Its function is as follows. Catalyzes the synthesis of alpha-ribazole-5'-phosphate from nicotinate mononucleotide (NAMN) and 5,6-dimethylbenzimidazole (DMB). This Shewanella sp. (strain MR-7) protein is Nicotinate-nucleotide--dimethylbenzimidazole phosphoribosyltransferase.